The following is a 193-amino-acid chain: Major intrinsically disordered NOTCH2-binding receptor 1-like homolog (193 aa).

S82 is modified (phosphoserine). N128 is a glycosylation site (N-linked (GlcNAc...) asparagine). Residues 172–192 form a helical membrane-spanning segment; that stretch reads GLILLLVASILVTIVTLSTIF.

The protein belongs to the MINAR family. Interacts with NOTCH2. In terms of tissue distribution, widely expressed in the cortex and Purkinje cells of cerebellum. Expressed in the inner ear, mainly in the hair cells, spiral ganglia, the spiral limbus, and the stria vascularis.

It localises to the lysosome membrane. The protein localises to the endoplasmic reticulum membrane. Binds cholesterol and may regulate the distribution and homeostasis of cholesterol in hair cells. May play a role in angiogenesis. This Mus musculus (Mouse) protein is Major intrinsically disordered NOTCH2-binding receptor 1-like homolog.